Consider the following 244-residue polypeptide: MENFTALFGAQADPPPPPTALGFGPGKPPPPPPPPAGGGPGTAPPPTAATAPPGADKSGAGCGPFYLMRELPGSTELTGSTNLITHYNLEQAYNKFCGKKVKEKLSNFLPDLPGMIDLPGSHDNSSLRSLIEKPPILSSSFNPITGTMLAGFRLHTGPLPEQCRLMHIQPPKKKNKHKHKQSRTQDPVPPETPSDSDHKKKKKKKEEDPDRKRKKKEKKKKKNRHSPDHPGMGSSQASSSSSLR.

Disordered regions lie at residues 1–56 and 171–244; these read MENF…PGAD and PKKK…SSLR. The span at 26 to 47 shows a compositional bias: pro residues; that stretch reads GKPPPPPPPPAGGGPGTAPPPT. The span at 171 to 182 shows a compositional bias: basic residues; it reads PKKKNKHKHKQS. Serine 194 carries the phosphoserine modification. The segment covering 212-224 has biased composition (basic residues); it reads KRKKKEKKKKKNR. The residue at position 226 (serine 226) is a Phosphoserine. A compositionally biased stretch (low complexity) spans 234-244; sequence SSQASSSSSLR.

This sequence belongs to the Mediator complex subunit 19 family. Component of the Mediator complex, which is composed of MED1, MED4, MED6, MED7, MED8, MED9, MED10, MED11, MED12, MED13, MED13L, MED14, MED15, MED16, MED17, MED18, MED19, MED20, MED21, MED22, MED23, MED24, MED25, MED26, MED27, MED29, MED30, MED31, CCNC, CDK8 and CDC2L6/CDK11. The MED12, MED13, CCNC and CDK8 subunits form a distinct module termed the CDK8 module. Mediator containing the CDK8 module is less active than Mediator lacking this module in supporting transcriptional activation. Individual preparations of the Mediator complex lacking one or more distinct subunits have been variously termed ARC, CRSP, DRIP, PC2, SMCC and TRAP.

Its subcellular location is the nucleus. Its function is as follows. Component of the Mediator complex, a coactivator involved in the regulated transcription of nearly all RNA polymerase II-dependent genes. Mediator functions as a bridge to convey information from gene-specific regulatory proteins to the basal RNA polymerase II transcription machinery. Mediator is recruited to promoters by direct interactions with regulatory proteins and serves as a scaffold for the assembly of a functional preinitiation complex with RNA polymerase II and the general transcription factors. The polypeptide is Mediator of RNA polymerase II transcription subunit 19 (MED19) (Homo sapiens (Human)).